The chain runs to 622 residues: Probable potassium transport system protein Kup (622 aa).

12 helical membrane-spanning segments follow: residues 7-27, 44-64, 95-115, 133-153, 165-185, 199-219, 243-263, 290-310, 338-358, 370-390, 395-415, and 422-442; these read LAIG…LYAF, VLGV…IQYV, GWLV…DSMI, PELQ…LFVL, FAPV…ISIV, AVLF…SVVL, WFGF…AMIV, LVIL…SGAF, IYIP…VLTF, IAVT…LVGV, WYYA…YFAA, and DGGW…TTWA.

The protein belongs to the HAK/KUP transporter (TC 2.A.72) family.

It localises to the cell inner membrane. The enzyme catalyses K(+)(in) + H(+)(in) = K(+)(out) + H(+)(out). Its function is as follows. Transport of potassium into the cell. Likely operates as a K(+):H(+) symporter. In Erythrobacter litoralis (strain HTCC2594), this protein is Probable potassium transport system protein Kup.